The chain runs to 762 residues: Protein PHTF1 (762 aa).

The PHTF domain maps to 6-150 (RDAISWYQKK…VHCQIVSTQI (145 aa)). Helical transmembrane passes span 77–97 (GLVR…VTSL), 99–119 (IFVW…LYFM), and 121–141 (PIVN…MGTV). The tract at residues 152 to 188 (RPSGNNGNRRRRKLRKTVNGDGSRENGNNSSDKARGV) is disordered. Residues asparagine 179, asparagine 180, and asparagine 197 are each glycosylated (N-linked (GlcNAc...) asparagine). A phosphoserine mark is found at serine 272, serine 276, serine 277, serine 334, and serine 336. 2 disordered regions span residues 344-379 (SAAF…SETE) and 393-415 (RSSV…TKRD). The segment covering 348–361 (SQGSRSGMSGGSRS) has biased composition (low complexity). Positions 365–376 (LRRDSESTRHDS) are enriched in basic and acidic residues. An N-linked (GlcNAc...) asparagine glycan is attached at asparagine 431. 4 helical membrane passes run 473-493 (GVGY…FPFL), 512-532 (EILT…LSII), 611-631 (VVVS…CAQV), and 645-665 (WEFL…ASLG). N-linked (GlcNAc...) asparagine glycosylation is found at asparagine 674 and asparagine 733. The helical transmembrane segment at 737–757 (VVILSAVSGVISDLLGFNIRL) threads the bilayer.

In terms of assembly, interacts with FEM1B.

It is found in the endoplasmic reticulum membrane. Its subcellular location is the golgi apparatus. It localises to the cis-Golgi network membrane. The chain is Protein PHTF1 (PHTF1) from Bos taurus (Bovine).